Reading from the N-terminus, the 434-residue chain is Putative nuclease OPG089 (434 aa).

Positions 33, 74, 168, 170, 196, and 198 each coordinate Mg(2+).

The protein belongs to the XPG/RAD2 endonuclease family. FEN1 subfamily. It depends on Mg(2+) as a cofactor.

It is found in the virion. Putative nuclease that seems to be required for double-strand break repair, homologous recombination, and production of full-length viral genomic DNA. The chain is Putative nuclease OPG089 (OPG089) from Homo sapiens (Human).